The following is a 341-amino-acid chain: Heat-shock protein cognate (HSC) co-chaperone sgt12 (341 aa).

A disordered region spans residues 86 to 123 (PSKEPASAGAQAQSTEAQQPKAGAPTPESDKLKSEGNA). 3 TPR repeats span residues 114 to 147 (SDKL…APAN), 148 to 181 (PIYL…DPKY), and 182 to 215 (SKAW…EGNG). The segment at 232–280 (EEANRGAEPPADDVDDAAGASRGAGGMPDLSSLASMLGGRGGGGGGMPD) is disordered. Gly residues predominate over residues 269-278 (GGRGGGGGGM).

This sequence belongs to the SGT family. In terms of assembly, forms homodimers. Component of the get4/get5/sgt2 sorting complex. Dimers of sgt2 bind directly a single get5. Binds HSC family members ssa1, sse1, hsp104 and hsc82 via its TPR domain.

It localises to the cytoplasm. Heat-shock protein cognate (HSC) co-chaperone that preferentially binds endoplasmic reticulum-destined tail-anchored (TA) proteins and directs them to the GET (guided entry of TA proteins) pathway via get4 and get5. Get4 and get5 form an obligate complex that catalyzes the transfer of tail-anchored proteins destined to the endoplasmic reticulum from sgt2 to the cytosolic targeting factor which then targets the TA protein to the ER membrane via get1/get2. This Aspergillus fumigatus (strain ATCC MYA-4609 / CBS 101355 / FGSC A1100 / Af293) (Neosartorya fumigata) protein is Heat-shock protein cognate (HSC) co-chaperone sgt12.